The primary structure comprises 256 residues: Pimeloyl-[acyl-carrier protein] methyl ester esterase (256 aa).

Residues 15–242 enclose the AB hydrolase-1 domain; it reads HLVLLHGWGL…AAHAPFISHP (228 aa). Substrate contacts are provided by residues Trp22, 82-83, and 143-147; these read SL and FLALQ. The active-site Nucleophile is the Ser82. Active-site residues include Asp207 and His235. His235 is a binding site for substrate.

It belongs to the AB hydrolase superfamily. Carboxylesterase BioH family. As to quaternary structure, monomer.

The protein resides in the cytoplasm. It catalyses the reaction 6-carboxyhexanoyl-[ACP] methyl ester + H2O = 6-carboxyhexanoyl-[ACP] + methanol + H(+). It participates in cofactor biosynthesis; biotin biosynthesis. Its function is as follows. The physiological role of BioH is to remove the methyl group introduced by BioC when the pimeloyl moiety is complete. It allows to synthesize pimeloyl-ACP via the fatty acid synthetic pathway through the hydrolysis of the ester bonds of pimeloyl-ACP esters. The chain is Pimeloyl-[acyl-carrier protein] methyl ester esterase from Escherichia coli (strain SMS-3-5 / SECEC).